A 91-amino-acid polypeptide reads, in one-letter code: UPF0213 protein NMC1807 (91 aa).

Residues 4–83 (SNWSVYLILC…AAQKRQLWEQ (80 aa)) enclose the GIY-YIG domain.

It belongs to the UPF0213 family.

The chain is UPF0213 protein NMC1807 from Neisseria meningitidis serogroup C / serotype 2a (strain ATCC 700532 / DSM 15464 / FAM18).